The following is a 122-amino-acid chain: Histone H2B.2 (122 aa).

Positions 1-10 (MAPKKAPAAT) are enriched in low complexity. Residues 1-28 (MAPKKAPAATTEKKVKKAPTTEKKNKKK) form a disordered region. Ala-2 carries the post-translational modification N,N,N-trimethylalanine. An N6-acetyllysine mark is found at Lys-5 and Lys-42. Lys-116 participates in a covalent cross-link: Glycyl lysine isopeptide (Lys-Gly) (interchain with G-Cter in ubiquitin).

It belongs to the histone H2B family. In terms of assembly, the nucleosome is a histone octamer containing two molecules each of H2A, H2B, H3 and H4 assembled in one H3-H4 heterotetramer and two H2A-H2B heterodimers. The octamer wraps approximately 147 bp of DNA. In terms of processing, acetylation occurs almost exclusively in the MAC. Post-translationally, monoubiquitination to form H2BK115ub1 gives a specific tag for epigenetic transcriptional activation and is also prerequisite for H3K4me and H3K79me formation.

It localises to the nucleus. It is found in the chromosome. In terms of biological role, core component of nucleosome. Nucleosomes wrap and compact DNA into chromatin, limiting DNA accessibility to the cellular machineries which require DNA as a template. Histones thereby play a central role in transcription regulation, DNA repair, DNA replication and chromosomal stability. DNA accessibility is regulated via a complex set of post-translational modifications of histones, also called histone code, and nucleosome remodeling. This chain is Histone H2B.2 (HTB2), found in Tetrahymena thermophila (strain SB210).